Reading from the N-terminus, the 413-residue chain is Glucose-1-phosphate adenylyltransferase (413 aa).

Alpha-D-glucose 1-phosphate-binding positions include G169, 184–185, and S201; that span reads EK.

It belongs to the bacterial/plant glucose-1-phosphate adenylyltransferase family. As to quaternary structure, homotetramer.

It catalyses the reaction alpha-D-glucose 1-phosphate + ATP + H(+) = ADP-alpha-D-glucose + diphosphate. The protein operates within glycan biosynthesis; glycogen biosynthesis. Involved in the biosynthesis of ADP-glucose, a building block required for the elongation reactions to produce glycogen. Catalyzes the reaction between ATP and alpha-D-glucose 1-phosphate (G1P) to produce pyrophosphate and ADP-Glc. This chain is Glucose-1-phosphate adenylyltransferase, found in Trichlorobacter lovleyi (strain ATCC BAA-1151 / DSM 17278 / SZ) (Geobacter lovleyi).